The sequence spans 98 residues: NADH-ubiquinone oxidoreductase chain 4L (98 aa).

A run of 3 helical transmembrane segments spans residues 2–22 (PSISTNITLAFTIALTGMLVF), 29–49 (SLLCLEGMMLAMFILSILFIM), and 61–81 (ILLLVLAACEAAIGLALLVMV).

The protein belongs to the complex I subunit 4L family. Core subunit of respiratory chain NADH dehydrogenase (Complex I) which is composed of 45 different subunits.

The protein localises to the mitochondrion inner membrane. The catalysed reaction is a ubiquinone + NADH + 5 H(+)(in) = a ubiquinol + NAD(+) + 4 H(+)(out). Its function is as follows. Core subunit of the mitochondrial membrane respiratory chain NADH dehydrogenase (Complex I) which catalyzes electron transfer from NADH through the respiratory chain, using ubiquinone as an electron acceptor. Part of the enzyme membrane arm which is embedded in the lipid bilayer and involved in proton translocation. In Lepilemur sahamalazensis (Sahamalaza sportive lemur), this protein is NADH-ubiquinone oxidoreductase chain 4L (MT-ND4L).